The sequence spans 305 residues: Protoheme IX farnesyltransferase 2 (305 aa).

8 helical membrane passes run 38–58, 60–80, 115–135, 157–177, 181–201, 227–247, 249–269, and 285–305; these read LITT…SFLG, INTV…SCAI, ILLV…AAVI, INTV…WTAV, IGVV…PHFL, VTKR…FFLG, LGLP…ILGL, and FVYS…LTLF.

The protein belongs to the UbiA prenyltransferase family. Protoheme IX farnesyltransferase subfamily. Interacts with CtaA.

It is found in the cell membrane. It catalyses the reaction heme b + (2E,6E)-farnesyl diphosphate + H2O = Fe(II)-heme o + diphosphate. It functions in the pathway porphyrin-containing compound metabolism; heme O biosynthesis; heme O from protoheme: step 1/1. In terms of biological role, converts heme B (protoheme IX) to heme O by substitution of the vinyl group on carbon 2 of heme B porphyrin ring with a hydroxyethyl farnesyl side group. The polypeptide is Protoheme IX farnesyltransferase 2 (ctaB2) (Bacillus subtilis (strain 168)).